A 56-amino-acid polypeptide reads, in one-letter code: Large ribosomal subunit protein bL32 (56 aa).

Residues 1–16 (MAVQKSKKSRSRRDMR) show a composition bias toward basic residues. The disordered stretch occupies residues 1-56 (MAVQKSKKSRSRRDMRRSHDAIDGPTLSVDSTTGETHRRHHVTADGYYKGRKVVNK).

It belongs to the bacterial ribosomal protein bL32 family.

This is Large ribosomal subunit protein bL32 from Idiomarina loihiensis (strain ATCC BAA-735 / DSM 15497 / L2-TR).